The primary structure comprises 275 residues: NH(3)-dependent NAD(+) synthetase (275 aa).

ATP is bound at residue 46-53; it reads GISGGQDS. D52 serves as a coordination point for Mg(2+). R140 contributes to the deamido-NAD(+) binding site. Position 160 (T160) interacts with ATP. Residue E165 participates in Mg(2+) binding. 2 residues coordinate deamido-NAD(+): K173 and D180. 2 residues coordinate ATP: K189 and T211. 260 to 261 lines the deamido-NAD(+) pocket; it reads HK.

The protein belongs to the NAD synthetase family. Homodimer.

It catalyses the reaction deamido-NAD(+) + NH4(+) + ATP = AMP + diphosphate + NAD(+) + H(+). Its pathway is cofactor biosynthesis; NAD(+) biosynthesis; NAD(+) from deamido-NAD(+) (ammonia route): step 1/1. Functionally, catalyzes the ATP-dependent amidation of deamido-NAD to form NAD. Uses ammonia as a nitrogen source. The polypeptide is NH(3)-dependent NAD(+) synthetase (Cronobacter sakazakii (strain ATCC BAA-894) (Enterobacter sakazakii)).